The sequence spans 335 residues: Cholinephosphotransferase 1 (335 aa).

2 helical membrane-spanning segments follow: residues 53-73 (PNAITLGGLLLNCLTALPLIA) and 84-108 (FWAYILGALGLFIYQSLDAIDGKQA). Asparagine 54 is a CDP-choline binding site. Residues aspartate 101 and aspartate 104 each coordinate Mg(2+). Position 109 (arginine 109) interacts with CDP-choline. 6 helical membrane-spanning segments follow: residues 116–140 (PLGELFDHGCDSISTVFVVLGSCIA), 151–169 (FFCCFVGLFMFYSAHWQTY), 181–197 (VTEVQIAITMLLLVSAF), 213–238 (ELKFFAVVGILCGTAVSCFNYFRIIF), 267–276 (IGPGLLFLDQ), and 284–313 (EYVVLWIALFISLFDMLRYATGVCLQIAAH). Aspartate 122 provides a ligand contact to Mg(2+). Histidine 123 serves as the catalytic Proton acceptor. Residue aspartate 126 coordinates Mg(2+).

It belongs to the CDP-alcohol phosphatidyltransferase class-I family. Mg(2+) serves as cofactor. The cofactor is Mn(2+).

It is found in the golgi apparatus membrane. It catalyses the reaction CDP-choline + a 1,2-diacyl-sn-glycerol = a 1,2-diacyl-sn-glycero-3-phosphocholine + CMP + H(+). The catalysed reaction is 1-octadecanoyl-2-(5Z,8Z,11Z,14Z-eicosatetraenoyl)-sn-glycerol + CDP-choline = 1-octadecanoyl-2-(5Z,8Z,11Z,14Z-eicosatetraenoyl)-sn-glycero-3-phosphocholine + CMP + H(+). The enzyme catalyses 1-hexadecanoyl-2-(9Z-octadecenoyl)-sn-glycerol + CDP-choline = 1-hexadecanoyl-2-(9Z-octadecenoyl)-sn-glycero-3-phosphocholine + CMP + H(+). It carries out the reaction 1-hexadecanoyl-2-(4Z,7Z,10Z,13Z,16Z,19Z-docosahexaenoyl)-sn-glycerol + CDP-choline = 1-hexadecanoyl-2-(4Z,7Z,10Z,13Z,16Z,19Z-docosahexaenoyl)-sn-glycero-3-phosphocholine + CMP + H(+). It catalyses the reaction 1,2-dioctanoyl-sn-glycerol + CDP-choline = 1,2-dioctanoyl-sn-glycero-3-phosphocholine + CMP + H(+). Its pathway is phospholipid metabolism; phosphatidylcholine biosynthesis; phosphatidylcholine from phosphocholine: step 2/2. In terms of biological role, catalyzes the final step of de novo phosphatidylcholine (PC) synthesis, i.e. the transfer of choline phosphate from CDP-choline to the free hydroxyl of a diacylglycerol (DAG), producing a PC. It thereby plays a central role in the formation and maintenance of vesicular membranes. In Gallus gallus (Chicken), this protein is Cholinephosphotransferase 1 (CHPT1).